The chain runs to 1107 residues: Unconventional myosin-Ib (1107 aa).

The 687-residue stretch at 15-701 (IGVGDMVLLE…TLFQLEDLRK (687 aa)) folds into the Myosin motor domain. Serine 60 is subject to Phosphoserine. 108-115 (GESGAGKT) contacts ATP. Lysine 287 is covalently cross-linked (Glycyl lysine isopeptide (Lys-Gly) (interchain with G-Cter in SUMO1); alternate). A Glycyl lysine isopeptide (Lys-Gly) (interchain with G-Cter in SUMO2); alternate cross-link involves residue lysine 287. Residues 592–599 (YIRCIKPN) are actin-binding. IQ domains lie at 704–727 (LEDLATLIQKIYRGWKCRTHFLLM), 728–749 (KRSQVVIAAWYRRYAQQKRYQQ), 750–778 (IKSSALVIQSYIRGWKARKILRELKHQKR), 780–807 (KEAATTIAAYWHGTQARRELKRLKEEAR), and 808–837 (RKHAVAVIWAYWLGLKVRREYRKFFRANAG). Residues 923–1107 (KALYPSSVGQ…NNRLLEVAVP (185 aa)) enclose the TH1 domain.

This sequence belongs to the TRAFAC class myosin-kinesin ATPase superfamily. Myosin family. Prominent expression is seen in the brain, lung and liver. It is also expressed in the heart and testis. A high level expression is seen in virtually all neurons (but not glia) in the postnatal and adult mouse brain and in neuroblasts of the cerebellar external granular layer.

Motor protein that may participate in process critical to neuronal development and function such as cell migration, neurite outgrowth and vesicular transport. The sequence is that of Unconventional myosin-Ib (Myo1b) from Mus musculus (Mouse).